The primary structure comprises 214 residues: Ribosomal RNA large subunit methyltransferase E (214 aa).

Glycine 60, tryptophan 62, aspartate 86, aspartate 102, and aspartate 127 together coordinate S-adenosyl-L-methionine. The active-site Proton acceptor is lysine 167.

Belongs to the class I-like SAM-binding methyltransferase superfamily. RNA methyltransferase RlmE family.

The protein resides in the cytoplasm. The catalysed reaction is uridine(2552) in 23S rRNA + S-adenosyl-L-methionine = 2'-O-methyluridine(2552) in 23S rRNA + S-adenosyl-L-homocysteine + H(+). Its function is as follows. Specifically methylates the uridine in position 2552 of 23S rRNA at the 2'-O position of the ribose in the fully assembled 50S ribosomal subunit. This is Ribosomal RNA large subunit methyltransferase E from Janthinobacterium sp. (strain Marseille) (Minibacterium massiliensis).